The chain runs to 196 residues: dITP/XTP pyrophosphatase (196 aa).

9–14 lines the substrate pocket; that stretch reads TSNAGK. Residues E39 and D68 each coordinate Mg(2+). The active-site Proton acceptor is D68. Substrate is bound by residues S69, 147–150, K170, and 175–176; these read FGYD and HR.

The protein belongs to the HAM1 NTPase family. Homodimer. Mg(2+) is required as a cofactor.

The enzyme catalyses XTP + H2O = XMP + diphosphate + H(+). The catalysed reaction is dITP + H2O = dIMP + diphosphate + H(+). It carries out the reaction ITP + H2O = IMP + diphosphate + H(+). Pyrophosphatase that catalyzes the hydrolysis of nucleoside triphosphates to their monophosphate derivatives, with a high preference for the non-canonical purine nucleotides XTP (xanthosine triphosphate), dITP (deoxyinosine triphosphate) and ITP. Seems to function as a house-cleaning enzyme that removes non-canonical purine nucleotides from the nucleotide pool, thus preventing their incorporation into DNA/RNA and avoiding chromosomal lesions. The polypeptide is dITP/XTP pyrophosphatase (Nostoc sp. (strain PCC 7120 / SAG 25.82 / UTEX 2576)).